The primary structure comprises 157 residues: Myosin regulatory light chain, striated adductor muscle (157 aa).

2 consecutive EF-hand domains span residues 16–51 (KQIQ…LGRA) and 85–120 (DSEE…MGDN). Ca(2+)-binding residues include D29, D31, D33, and D40.

In terms of biological role, in molluscan muscle, calcium regulation is associated with myosin rather than with actin. Muscle myosin contains two types of light chains: the catalytic light chain, essential for ATPase activity, and the regulatory light chain, a calcium-binding protein responsible for Ca(2+) dependent binding and Ca(2+) dependent Mg-ATPase activity. In Argopecten irradians (Bay scallop), this protein is Myosin regulatory light chain, striated adductor muscle.